Consider the following 440-residue polypeptide: Xylose isomerase (440 aa).

Residues histidine 100 and aspartate 103 contribute to the active site. Residues glutamate 231, glutamate 267, histidine 270, aspartate 295, aspartate 306, aspartate 308, and aspartate 338 each coordinate Mg(2+).

It belongs to the xylose isomerase family. As to quaternary structure, homotetramer. It depends on Mg(2+) as a cofactor.

The protein resides in the cytoplasm. It carries out the reaction alpha-D-xylose = alpha-D-xylulofuranose. The protein is Xylose isomerase of Burkholderia orbicola (strain MC0-3).